The chain runs to 221 residues: uncharacterized protein (221 aa).

A signal peptide spans M1–V18.

This is an uncharacterized protein from Aquifex aeolicus (strain VF5).